We begin with the raw amino-acid sequence, 121 residues long: Acidic phospholipase A2 PLA-2 (121 aa).

7 disulfide bridges follow: Cys-26–Cys-115, Cys-28–Cys-44, Cys-43–Cys-95, Cys-49–Cys-121, Cys-50–Cys-88, Cys-57–Cys-81, and Cys-75–Cys-86. Ca(2+)-binding residues include Tyr-27, Gly-29, and Gly-31. His-47 is an active-site residue. Asp-48 is a binding site for Ca(2+). Asp-89 is a catalytic residue.

Belongs to the phospholipase A2 family. Group II subfamily. D49 sub-subfamily. Ca(2+) is required as a cofactor. Expressed by the venom gland.

Its subcellular location is the secreted. The enzyme catalyses a 1,2-diacyl-sn-glycero-3-phosphocholine + H2O = a 1-acyl-sn-glycero-3-phosphocholine + a fatty acid + H(+). Its function is as follows. PLA2 catalyzes the calcium-dependent hydrolysis of the 2-acyl groups in 3-sn-phosphoglycerides. This Eristicophis macmahoni (Leaf-nosed viper) protein is Acidic phospholipase A2 PLA-2.